The sequence spans 416 residues: GTPase Obg (416 aa).

Residues 1–157 (MFQDVLVITV…RRLRLELMLI (157 aa)) form the Obg domain. 2 disordered regions span residues 25-44 (EKFV…GGSV) and 62-82 (TYKA…RGGE). The span at 32-42 (GPDGGDGGRGG) shows a compositional bias: gly residues. Positions 63-72 (YKAEDGEHGR) are enriched in basic and acidic residues. The OBG-type G domain occupies 158 to 324 (ADVGLVGYPN…LKEALHALVR (167 aa)). Residues 164–171 (GYPNAGKS), 189–193 (FTTLS), 211–214 (DIPG), 277–280 (NKVD), and 305–307 (SAL) contribute to the GTP site. 2 residues coordinate Mg(2+): Ser171 and Thr191. Residues 336–414 (PRKEVQAGVE…IGGLEFEYIP (79 aa)) form the OCT domain.

This sequence belongs to the TRAFAC class OBG-HflX-like GTPase superfamily. OBG GTPase family. Monomer. It depends on Mg(2+) as a cofactor.

Its subcellular location is the cytoplasm. Functionally, an essential GTPase which binds GTP, GDP and possibly (p)ppGpp with moderate affinity, with high nucleotide exchange rates and a fairly low GTP hydrolysis rate. Plays a role in control of the cell cycle, stress response, ribosome biogenesis and in those bacteria that undergo differentiation, in morphogenesis control. The polypeptide is GTPase Obg (Thermus thermophilus (strain ATCC BAA-163 / DSM 7039 / HB27)).